We begin with the raw amino-acid sequence, 169 residues long: NAD(P)H-quinone oxidoreductase subunit J, chloroplastic (169 aa).

It belongs to the complex I 30 kDa subunit family. NDH is composed of at least 16 different subunits, 5 of which are encoded in the nucleus.

The protein resides in the plastid. The protein localises to the chloroplast thylakoid membrane. It carries out the reaction a plastoquinone + NADH + (n+1) H(+)(in) = a plastoquinol + NAD(+) + n H(+)(out). The catalysed reaction is a plastoquinone + NADPH + (n+1) H(+)(in) = a plastoquinol + NADP(+) + n H(+)(out). In terms of biological role, NDH shuttles electrons from NAD(P)H:plastoquinone, via FMN and iron-sulfur (Fe-S) centers, to quinones in the photosynthetic chain and possibly in a chloroplast respiratory chain. The immediate electron acceptor for the enzyme in this species is believed to be plastoquinone. Couples the redox reaction to proton translocation, and thus conserves the redox energy in a proton gradient. The chain is NAD(P)H-quinone oxidoreductase subunit J, chloroplastic from Anthoceros angustus (Hornwort).